The following is a 974-amino-acid chain: Alpha-1,4 glucan phosphorylase L-2 isozyme, chloroplastic/amyloplastic (974 aa).

The transit peptide at 1–81 (MATFAVSGLN…LDVFQPDSTS (81 aa)) directs the protein to the chloroplast. Residues 509–551 (ADVEKAADEEQEEEGKDDSKDEETEAVKAETTNEEEETEVKKV) form a disordered region. Over residues 517-532 (EEQEEEGKDDSKDEET) the composition is skewed to acidic residues. The residue at position 820 (lysine 820) is an N6-(pyridoxal phosphate)lysine.

This sequence belongs to the glycogen phosphorylase family. Pyridoxal 5'-phosphate is required as a cofactor. As to expression, leaves.

It is found in the plastid. It localises to the chloroplast. The protein localises to the amyloplast. The catalysed reaction is [(1-&gt;4)-alpha-D-glucosyl](n) + phosphate = [(1-&gt;4)-alpha-D-glucosyl](n-1) + alpha-D-glucose 1-phosphate. Its function is as follows. Phosphorylase is an important allosteric enzyme in carbohydrate metabolism. Enzymes from different sources differ in their regulatory mechanisms and in their natural substrates. However, all known phosphorylases share catalytic and structural properties. The sequence is that of Alpha-1,4 glucan phosphorylase L-2 isozyme, chloroplastic/amyloplastic (STP-1) from Solanum tuberosum (Potato).